Reading from the N-terminus, the 327-residue chain is Fructose-1,6-bisphosphatase class 1 (327 aa).

Residues glutamate 84, aspartate 103, leucine 105, and aspartate 106 each coordinate Mg(2+). Residues 106–109, asparagine 198, and lysine 264 contribute to the substrate site; that span reads DGSS. Glutamate 270 contacts Mg(2+).

It belongs to the FBPase class 1 family. Homotetramer. Requires Mg(2+) as cofactor.

Its subcellular location is the cytoplasm. The catalysed reaction is beta-D-fructose 1,6-bisphosphate + H2O = beta-D-fructose 6-phosphate + phosphate. It functions in the pathway carbohydrate biosynthesis; gluconeogenesis. This chain is Fructose-1,6-bisphosphatase class 1, found in Psychrobacter cryohalolentis (strain ATCC BAA-1226 / DSM 17306 / VKM B-2378 / K5).